A 474-amino-acid chain; its full sequence is Synaptotagmin-17 (474 aa).

The tract at residues 60–117 is disordered; sequence WLMASRSNDKDGDSVHTASDVPLTPRTNSPDGRRSSSDTSKSTYSLTRRISSLDSRRP. The segment covering 96–117 has biased composition (low complexity); the sequence is SDTSKSTYSLTRRISSLDSRRP. Residues serine 118 and serine 119 each carry the phosphoserine modification. 2 C2 domains span residues 184 to 310 and 321 to 455; these read QLGM…HWWK and ELGE…EQWH.

This sequence belongs to the synaptotagmin family. As to expression, expressed in brain and kidney.

It is found in the membrane. Plays a role in dendrite formation by melanocytes. The chain is Synaptotagmin-17 (Syt17) from Rattus norvegicus (Rat).